The sequence spans 316 residues: ATP synthase gamma chain (316 aa).

It belongs to the ATPase gamma chain family. As to quaternary structure, F-type ATPases have 2 components, CF(1) - the catalytic core - and CF(0) - the membrane proton channel. CF(1) has five subunits: alpha(3), beta(3), gamma(1), delta(1), epsilon(1). CF(0) has three main subunits: a, b and c.

It is found in the cellular thylakoid membrane. In terms of biological role, produces ATP from ADP in the presence of a proton gradient across the membrane. The gamma chain is believed to be important in regulating ATPase activity and the flow of protons through the CF(0) complex. The protein is ATP synthase gamma chain of Synechococcus elongatus (strain ATCC 33912 / PCC 7942 / FACHB-805) (Anacystis nidulans R2).